The chain runs to 466 residues: 3-isopropylmalate dehydratase large subunit (466 aa).

Residues cysteine 347, cysteine 407, and cysteine 410 each coordinate [4Fe-4S] cluster.

The protein belongs to the aconitase/IPM isomerase family. LeuC type 1 subfamily. Heterodimer of LeuC and LeuD. It depends on [4Fe-4S] cluster as a cofactor.

The catalysed reaction is (2R,3S)-3-isopropylmalate = (2S)-2-isopropylmalate. It participates in amino-acid biosynthesis; L-leucine biosynthesis; L-leucine from 3-methyl-2-oxobutanoate: step 2/4. Functionally, catalyzes the isomerization between 2-isopropylmalate and 3-isopropylmalate, via the formation of 2-isopropylmaleate. The sequence is that of 3-isopropylmalate dehydratase large subunit from Blochmanniella floridana.